Here is a 208-residue protein sequence, read N- to C-terminus: N-(5'-phosphoribosyl)anthranilate isomerase (208 aa).

Belongs to the TrpF family.

It catalyses the reaction N-(5-phospho-beta-D-ribosyl)anthranilate = 1-(2-carboxyphenylamino)-1-deoxy-D-ribulose 5-phosphate. It participates in amino-acid biosynthesis; L-tryptophan biosynthesis; L-tryptophan from chorismate: step 3/5. The polypeptide is N-(5'-phosphoribosyl)anthranilate isomerase (Chlamydia trachomatis serovar A (strain ATCC VR-571B / DSM 19440 / HAR-13)).